The following is a 130-amino-acid chain: Small ribosomal subunit protein uS8 (130 aa).

It belongs to the universal ribosomal protein uS8 family. As to quaternary structure, part of the 30S ribosomal subunit.

Functionally, one of the primary rRNA binding proteins, it binds directly to 16S rRNA central domain where it helps coordinate assembly of the platform of the 30S subunit. In Methanococcus voltae, this protein is Small ribosomal subunit protein uS8.